Here is a 452-residue protein sequence, read N- to C-terminus: Bifunctional protein GlmU (452 aa).

The tract at residues 1–226 (MSLAVVILAA…GWEVDGVNDR (226 aa)) is pyrophosphorylase. UDP-N-acetyl-alpha-D-glucosamine contacts are provided by residues 8-11 (LAAG), lysine 22, glutamine 73, 78-79 (GT), 99-101 (YGD), glycine 136, glutamate 151, asparagine 166, and asparagine 224. Residue aspartate 101 participates in Mg(2+) binding. Asparagine 224 serves as a coordination point for Mg(2+). A linker region spans residues 227–247 (VQLARLERIYQQAQAETLMRD). Residues 248–452 (GVTLLDPSRL…VANWQRPKKG (205 aa)) are N-acetyltransferase. Positions 330 and 348 each coordinate UDP-N-acetyl-alpha-D-glucosamine. Catalysis depends on histidine 360, which acts as the Proton acceptor. 2 residues coordinate UDP-N-acetyl-alpha-D-glucosamine: tyrosine 363 and asparagine 374. Residues alanine 377, 383-384 (NY), serine 402, alanine 420, and arginine 437 each bind acetyl-CoA.

The protein in the N-terminal section; belongs to the N-acetylglucosamine-1-phosphate uridyltransferase family. In the C-terminal section; belongs to the transferase hexapeptide repeat family. In terms of assembly, homotrimer. The cofactor is Mg(2+).

It localises to the cytoplasm. The enzyme catalyses alpha-D-glucosamine 1-phosphate + acetyl-CoA = N-acetyl-alpha-D-glucosamine 1-phosphate + CoA + H(+). It catalyses the reaction N-acetyl-alpha-D-glucosamine 1-phosphate + UTP + H(+) = UDP-N-acetyl-alpha-D-glucosamine + diphosphate. It participates in nucleotide-sugar biosynthesis; UDP-N-acetyl-alpha-D-glucosamine biosynthesis; N-acetyl-alpha-D-glucosamine 1-phosphate from alpha-D-glucosamine 6-phosphate (route II): step 2/2. Its pathway is nucleotide-sugar biosynthesis; UDP-N-acetyl-alpha-D-glucosamine biosynthesis; UDP-N-acetyl-alpha-D-glucosamine from N-acetyl-alpha-D-glucosamine 1-phosphate: step 1/1. The protein operates within bacterial outer membrane biogenesis; LPS lipid A biosynthesis. Its function is as follows. Catalyzes the last two sequential reactions in the de novo biosynthetic pathway for UDP-N-acetylglucosamine (UDP-GlcNAc). The C-terminal domain catalyzes the transfer of acetyl group from acetyl coenzyme A to glucosamine-1-phosphate (GlcN-1-P) to produce N-acetylglucosamine-1-phosphate (GlcNAc-1-P), which is converted into UDP-GlcNAc by the transfer of uridine 5-monophosphate (from uridine 5-triphosphate), a reaction catalyzed by the N-terminal domain. The polypeptide is Bifunctional protein GlmU (Alcanivorax borkumensis (strain ATCC 700651 / DSM 11573 / NCIMB 13689 / SK2)).